The primary structure comprises 1346 residues: Toll-like receptor Tollo (1346 aa).

The first 21 residues, 1–21 (MLATTHMLYVLIATCVIPIFG), serve as a signal peptide directing secretion. Topologically, residues 22 to 1021 (AALSKTVLYQ…NQPPKLDYIP (1000 aa)) are extracellular. N-linked (GlcNAc...) asparagine glycosylation is found at Asn63, Asn112, and Asn126. LRR repeat units lie at residues 97–120 (LVELRDLTIEYCKLGNLTDGSFRG), 124–146 (LRNLTIRTHNGDWSTMSLEMASN), 151–174 (FRQLERLDLSLNNIWLIPDGMVCP), 176–198 (KSLQHLNASYNKIQDISNFYFSA), 209–232 (GSTLQSLDLSANKMVSLPTAMLSA), 234–256 (GRLTHLNMAKNSMSFLADRAFEG), 257–280 (LLSLRVVDLSANRLTSLPPELFAE), 282–304 (KQLQEIYLRNNSINVLAPGIFGE), 306–330 (AELLVLDLASNELNSQWINAATFVG), 331–354 (LKRLMMLDLSANKISRLEAHIFRP), 355–378 (LASLQILKLEDNYIDQLPGGIFAD), 380–402 (TNLHTLILSRNRISVIEQRTLQG), 404–426 (KNLLVLSLDFNRISRMDQRSLVN), 427–450 (CSQLQDLHLNDNKLQAVPEALAHV), 452–473 (LLKTLDVGENMISQIENTSITQ), 474–497 (LESLYGLRMTENSLTHIRRGVFDR), 498–521 (MSSLQILNLSQNKLKSIEAGSLQR), 523–544 (SQLQAIRLDGNQLKSIAGLFTE), 546–568 (PNLVWLNISGNRLEKFDYSHIPI), 570–591 (LQWLDVRANRITQLGNYFEIES), 593–614 (LSLSTFDASYNLLTEITASSIP), 615–637 (NSVEVLYLNDNQISKIQPYTFFK), and 638–661 (KPNLTRVDLVRNRLTTLEPNALRL). Residue Asn182 is glycosylated (N-linked (GlcNAc...) asparagine). N-linked (GlcNAc...) asparagine glycosylation is present at Asn291. N-linked (GlcNAc...) asparagine glycosylation occurs at Asn426. N-linked (GlcNAc...) asparagine glycosylation is present at Asn468. N-linked (GlcNAc...) asparagine glycosylation occurs at Asn505. Asn552 is a glycosylation site (N-linked (GlcNAc...) asparagine). A glycan (N-linked (GlcNAc...) asparagine) is linked at Asn640. 4 cysteine pairs are disulfide-bonded: Cys682-Cys710, Cys684-Cys733, Cys757-Cys763, and Cys761-Cys776. LRR repeat units lie at residues 790–813 (PMDSTQLYLDGNNFRELQSHAFIG), 814–837 (RKRLKVLHLNHSRIEVLHNRTFYG), 838–861 (LLELEVLQLQSNQLKALNGNEFQG), 863–885 (DNLQELYLQHNAIATIDTLTFTH), 887–909 (YHLKILRLDHNAITSFAVWNFLP), and 912–938 (LNELRLASNPWTCSCEFIDKLRDYINR). N-linked (GlcNAc...) asparagine glycans are attached at residues Asn823 and Asn832. A disulfide bridge connects residues Cys924 and Cys950. Asn956 and Asn1000 each carry an N-linked (GlcNAc...) asparagine glycan. The helical transmembrane segment at 1022-1042 (ILVAILTAFIFVMICISLVFI) threads the bilayer. Residues 1043-1346 (FRQEMRVWCH…PTPASRNLHM (304 aa)) lie on the Cytoplasmic side of the membrane. One can recognise a TIR domain in the interval 1074-1209 (KLFDAFVSYS…LFWQKLRFAL (136 aa)). The tract at residues 1235 to 1346 (HHHHHVHQQA…PTPASRNLHM (112 aa)) is disordered. Low complexity predominate over residues 1267–1300 (PGSFRRQPSLHQQQQQQQQIRGNNNTTQQQQQQQ).

This sequence belongs to the Toll-like receptor family. As to quaternary structure, may interact (via the extracellular domain) with 18w (via the extracellular domain).

The protein localises to the cell membrane. It is found in the apical cell membrane. Functionally, toll-related receptor. Probably specific to larval innate immunity. Involved in the tracheal immune response of larvae to Gram-negative and perhaps Gram-positive bacteria; upon infection it negatively regulates the immune deficiency (Imd) signaling cascade specifically in the respiratory epithelium to prevent the overexpression of antimicrobial peptides (AMP). Involved in the NF-kappa-B-dependent apoptosis of unfit cells during cell competition. Involved in neuron-specific glycosylation. Positively controls the neuromuscular junction (NMJ) growth in presynaptic motorneurons, probably via the JNK pathway. During development of the peripheral nervous system, may function in the NF-kappa-B (rel) regulatory cascade to repress expression of the neuron-specific genes sc and ase in non-neuronal cells. Promotes heterophilic cell adhesion with 18w in vitro. May have a minor role in leg development. May be involved in determining the proximal cell fate in the wing, possibly by negatively regulating the Dpp signaling pathway. May also be involved in the Dpp signaling pathway in the eye. Possibly functions with 18w and Toll-6 during convergent extension, to help direct proper planar cell polarity, cell intercalation and axis elongation. This chain is Toll-like receptor Tollo, found in Drosophila melanogaster (Fruit fly).